The primary structure comprises 240 residues: MVRTRELRRGFGDRTVLRGIDLDIARGEFVALLGRSGSGKSTLLRALAELDDAGTGSGELRVPSERAVVFQDSRLLPWARVLDNVILGLSGADAAARGRAALAEVGLAGRERAWPRELSGGEQQRVALARSLVREPELLLADEPFGALDALTRIRMHALLQDLCARHKPAVLLVTHDVDEAVLLADRVLVLQDGRLATDLRIELPRPRRHSAPEFIHARELLLAALGVDLAAPEEEKQAS.

In terms of domain architecture, ABC transporter spans 2–218; the sequence is VRTRELRRGF…RHSAPEFIHA (217 aa). Residue 34 to 41 participates in ATP binding; that stretch reads GRSGSGKS.

The protein belongs to the ABC transporter superfamily. Aliphatic sulfonates importer (TC 3.A.1.17.2) family. As to quaternary structure, the complex is composed of two ATP-binding proteins (SsuB), two transmembrane proteins (SsuC) and a solute-binding protein (SsuA).

The protein resides in the cell membrane. The enzyme catalyses ATP + H2O + aliphatic sulfonate-[sulfonate-binding protein]Side 1 = ADP + phosphate + aliphatic sulfonateSide 2 + [sulfonate-binding protein]Side 1.. In terms of biological role, part of the ABC transporter complex SsuABC involved in aliphatic sulfonates import. Responsible for energy coupling to the transport system. This Nocardia farcinica (strain IFM 10152) protein is Aliphatic sulfonates import ATP-binding protein SsuB 2.